The sequence spans 24 residues: Pseudin-2 (24 aa).

Expressed by the skin glands.

It localises to the secreted. Functionally, antimicrobial peptide with activity against fungus (C.albicans) and Gram-positive and Gram-negative bacteria (S.aureus and E.coli). Also has low hemolytic activity against human erythrocytes. The polypeptide is Pseudin-2 (Pseudis paradoxa (Paradoxical frog)).